The following is a 174-amino-acid chain: Crossover junction endodeoxyribonuclease RuvC (174 aa).

Active-site residues include D8, E67, and D139. Mg(2+)-binding residues include D8, E67, and D139.

The protein belongs to the RuvC family. Homodimer which binds Holliday junction (HJ) DNA. The HJ becomes 2-fold symmetrical on binding to RuvC with unstacked arms; it has a different conformation from HJ DNA in complex with RuvA. In the full resolvosome a probable DNA-RuvA(4)-RuvB(12)-RuvC(2) complex forms which resolves the HJ. Mg(2+) serves as cofactor.

It localises to the cytoplasm. The catalysed reaction is Endonucleolytic cleavage at a junction such as a reciprocal single-stranded crossover between two homologous DNA duplexes (Holliday junction).. In terms of biological role, the RuvA-RuvB-RuvC complex processes Holliday junction (HJ) DNA during genetic recombination and DNA repair. Endonuclease that resolves HJ intermediates. Cleaves cruciform DNA by making single-stranded nicks across the HJ at symmetrical positions within the homologous arms, yielding a 5'-phosphate and a 3'-hydroxyl group; requires a central core of homology in the junction. The consensus cleavage sequence is 5'-(A/T)TT(C/G)-3'. Cleavage occurs on the 3'-side of the TT dinucleotide at the point of strand exchange. HJ branch migration catalyzed by RuvA-RuvB allows RuvC to scan DNA until it finds its consensus sequence, where it cleaves and resolves the cruciform DNA. The protein is Crossover junction endodeoxyribonuclease RuvC of Pseudomonas paraeruginosa (strain DSM 24068 / PA7) (Pseudomonas aeruginosa (strain PA7)).